Consider the following 82-residue polypeptide: Small ribosomal subunit protein eS27 (82 aa).

A C4-type zinc finger spans residues 37–59 (CPGCFTITTVFSHAQTVVICQGC).

Belongs to the eukaryotic ribosomal protein eS27 family. In terms of assembly, component of the small ribosomal subunit (SSU). Mature N.crassa ribosomes consist of a small (40S) and a large (60S) subunit. The 40S small subunit contains 1 molecule of ribosomal RNA (18S rRNA) and at least 32 different proteins. The large 60S subunit contains 3 rRNA molecules (26S, 5.8S and 5S rRNA) and at least 42 different proteins. Zn(2+) serves as cofactor.

The protein resides in the cytoplasm. In terms of biological role, component of the ribosome, a large ribonucleoprotein complex responsible for the synthesis of proteins in the cell. The small ribosomal subunit (SSU) binds messenger RNAs (mRNAs) and translates the encoded message by selecting cognate aminoacyl-transfer RNA (tRNA) molecules. The large subunit (LSU) contains the ribosomal catalytic site termed the peptidyl transferase center (PTC), which catalyzes the formation of peptide bonds, thereby polymerizing the amino acids delivered by tRNAs into a polypeptide chain. The nascent polypeptides leave the ribosome through a tunnel in the LSU and interact with protein factors that function in enzymatic processing, targeting, and the membrane insertion of nascent chains at the exit of the ribosomal tunnel. This Neurospora crassa (strain ATCC 24698 / 74-OR23-1A / CBS 708.71 / DSM 1257 / FGSC 987) protein is Small ribosomal subunit protein eS27 (crp-6).